Reading from the N-terminus, the 515-residue chain is RNA exonuclease NGL2 (515 aa).

2 disordered regions span residues 1–54 and 353–381; these read MTQD…SKPI and RDGE…PVPE. Positions 21–34 are enriched in basic and acidic residues; the sequence is EINKSVKDAKHQTN. Basic residues predominate over residues 40 to 52; that stretch reads QHKKKGKKGKKSK. A compositionally biased stretch (basic and acidic residues) spans 369 to 381; that stretch reads KYGKDQPESPVPE.

This sequence belongs to the CCR4/nocturin family.

The protein resides in the cytoplasm. The protein localises to the nucleus. Its function is as follows. Involved in pre-rRNA processing. Required for the final stage of 3'-end maturation of 5.8S rRNA at site E. The sequence is that of RNA exonuclease NGL2 (NGL2) from Saccharomyces cerevisiae (strain ATCC 204508 / S288c) (Baker's yeast).